The primary structure comprises 523 residues: MTLSKLLYLSAIDYLNTKSKGGAHLNLTYYIVATIIIAVIAVYVDYYIRKNVSAAKISNAEEKGRNIIEDAKREAESKKKEAILEAKEEMHRLRNDFEKESKDRRNEIQRLERRIIQREEALDKKGDMLEKKEESLNKKHQELENKKSNIENLYEKQREELERLAGLTSDQAKEMLLEEVRKEIKHETAMLIKEVETKAKEEADKKAREITTYAIQRCAADHVAETTVYVVNLPNDEMKGRIIGREGRNIRTLETLTGVDLIIDDTPEAVILSAFDPVRREVARIALEKLIMDGRIHPARIEEMVEKAKKEVENNIREEGEQATFETSVHGLHSELIKLLGRLKYRTSYGQNVLKHSIEVSYLAGLMASELGMDPTLAKRAGLLHDIGKAVDHEVEGPHAIIGAEVAKRYHESSIVVNAIAAHHGDEEFESIEAILVQAADAISAARPGARRETLEAYIKRLEKLEEIANSYEGVEKSYAIQAGRELRIIVKPEVVDDAGSYEMARNMAKTIENELEYLVKLR.

A helical transmembrane segment spans residues 28 to 48; that stretch reads TYYIVATIIIAVIAVYVDYYI. Residues 227–312 form the KH domain; sequence TVYVVNLPND…EMVEKAKKEV (86 aa). One can recognise an HD domain in the interval 353-446; the sequence is VLKHSIEVSY…VQAADAISAA (94 aa).

This sequence belongs to the RNase Y family.

It is found in the cell membrane. Functionally, endoribonuclease that initiates mRNA decay. This chain is Ribonuclease Y, found in Clostridium tetani (strain Massachusetts / E88).